The sequence spans 445 residues: Mutanase Pc12g07500 (445 aa).

Residues 1–21 form the signal peptide; sequence MIWKSLFSALAILTHILPALT. Residues N386 and N437 are each glycosylated (N-linked (GlcNAc...) asparagine).

This sequence belongs to the glycosyl hydrolase 71 family. As to quaternary structure, monomer.

It is found in the secreted. It carries out the reaction Endohydrolysis of (1-&gt;3)-alpha-D-glucosidic linkages in isolichenin, pseudonigeran and nigeran.. Functionally, hydrolyzes 1,3-alpha-glucan predominantly into pentasaccharides. May enhance the efficacy of fungal antibiotics by degrading bacterial exopolysaccharides. In Penicillium rubens (strain ATCC 28089 / DSM 1075 / NRRL 1951 / Wisconsin 54-1255) (Penicillium chrysogenum), this protein is Mutanase Pc12g07500.